The following is a 982-amino-acid chain: Coatomer subunit beta (982 aa).

HEAT repeat units follow at residues 16 to 53, 130 to 167, 241 to 278, and 317 to 352; these read SGAPVNSKELKSALEKGDMKARASALEALIRMHLNGEP, ELVEPLVSSVVQNLTHRVTYVRRNAVLAVHRIFKRFPE, YDKGRYVTVLFSILQSNNPAVRYQCASTLLSISTSPTA, and LQDSLLDILSVLANGTMEIRKRIVTLGVELVSNQNS.

As to quaternary structure, oligomeric complex that consists of at least the alpha, beta, beta', gamma, delta, epsilon and zeta subunits.

It is found in the cytoplasm. The protein resides in the golgi apparatus membrane. It localises to the cytoplasmic vesicle. The protein localises to the COPI-coated vesicle membrane. Functionally, the coatomer is a cytosolic protein complex that binds to dilysine motifs and reversibly associates with Golgi non-clathrin-coated vesicles, which further mediate biosynthetic protein transport from the ER, via the Golgi up to the trans Golgi network. Coatomer complex is required for budding from Golgi membranes, and is essential for the retrograde Golgi-to-ER transport of dilysine-tagged proteins. In Trypanosoma brucei brucei, this protein is Coatomer subunit beta.